The primary structure comprises 687 residues: MKKADAAARARDLRERIRAADHAYYVLDQPVLADAEYDRLMHELQAIEAEHPELVTADSPTQRVSGAPSERFERVVHREPMLSLGNVQSDDELHEFDARVRRLLGLPEGEAVGYVVEPKLDGLAVELVYRDGAFTGGSTRGDGVNGEDVTANLRVVGGLGANRGVPHALEGTPPPRVEVRGEVLLFKEHFEAMNRQLVRAGDEPFANPRNAAAGTLRQLDWRVTARRPLSFVAYEALVPGGDPWRTHWEKLEALAAWGFETNPENRRCRGLGEVLAYRDRMAERRFELPYDTDGIVVKVDDLDWRRRLGAASKFPRWAVAFKYPPQEEATRIRRIWASVGRTGVLTPVVDFDPVRLSGAMVARATLHNEDEMRRKDILEGDWVLVRRAGEVIPEVVKPLPERRTGEERPFRFPAECPVCGARVVREEGEKVYRCTGAACPAQLVGRICHFAQRRALDIEGLGEKLAAGLVERGQVKDFADLYAVPFEVWQQLFSRPRKEQDAGAARELPEKSAQNMVAALERSRSTTLRRFLFALGIPQVGEATAATLARHFGDLARILDADEEALKGVRDVGPETASEIRAWTQEPQNRRVVERLLAAGVRPEPEVVEARGPFAGKTVVLTGGLSAMSRDDAKAEVERRGGKVSGSVSRKTDLVVAGEEAGSKLEKARSLGVRVVGEEEFVRLLKE.

NAD(+) contacts are provided by residues 34–38 (DAEYD), 83–84 (SL), and glutamate 117. The active-site N6-AMP-lysine intermediate is the lysine 119. 4 residues coordinate NAD(+): arginine 140, glutamate 182, lysine 298, and lysine 322. The Zn(2+) site is built by cysteine 416, cysteine 419, cysteine 434, and cysteine 439. The BRCT domain occupies 609–687 (EARGPFAGKT…EEEFVRLLKE (79 aa)).

This sequence belongs to the NAD-dependent DNA ligase family. LigA subfamily. Mg(2+) is required as a cofactor. Mn(2+) serves as cofactor.

It catalyses the reaction NAD(+) + (deoxyribonucleotide)n-3'-hydroxyl + 5'-phospho-(deoxyribonucleotide)m = (deoxyribonucleotide)n+m + AMP + beta-nicotinamide D-nucleotide.. Functionally, DNA ligase that catalyzes the formation of phosphodiester linkages between 5'-phosphoryl and 3'-hydroxyl groups in double-stranded DNA using NAD as a coenzyme and as the energy source for the reaction. It is essential for DNA replication and repair of damaged DNA. The chain is DNA ligase from Anaeromyxobacter dehalogenans (strain 2CP-C).